The sequence spans 130 residues: Acidic phospholipase A2 daboiatoxin B chain (130 aa).

The signal sequence occupies residues 1–8 (MCLIGVEG). 7 cysteine pairs are disulfide-bonded: cysteine 34-cysteine 123, cysteine 36-cysteine 52, cysteine 51-cysteine 103, cysteine 57-cysteine 130, cysteine 58-cysteine 96, cysteine 65-cysteine 89, and cysteine 83-cysteine 94. Positions 35, 37, and 39 each coordinate Ca(2+). Histidine 55 is an active-site residue. Aspartate 56 provides a ligand contact to Ca(2+). Aspartate 97 is an active-site residue.

Belongs to the phospholipase A2 family. Group II subfamily. D49 sub-subfamily. In terms of assembly, heterodimer of an acidic protein having phospholipase A2 activity (B chain) and an A chain which weakly inhibits the B chain enzymatic activity but potentiates its lethal potency. Ca(2+) serves as cofactor. As to expression, expressed by the venom gland.

The protein localises to the secreted. It catalyses the reaction a 1,2-diacyl-sn-glycero-3-phosphocholine + H2O = a 1-acyl-sn-glycero-3-phosphocholine + a fatty acid + H(+). Its function is as follows. Monomer: Snake venom phospholipase A2 (PLA2) that shows a high PLA2 activity (2110 umol/min/mg). In terms of biological role, heterodimer (A and B chains): snake venom phospholipase A2 that shows a moderate PLA2 activity (1377 umol/min/mg). Acts as a presynaptic neurotoxin. In vivo, induces edema and produces neurotoxic symptoms in mice. It exhibits indirect hemolysis and a strong myonecrotic activity and is cytotoxic. PLA2 catalyzes the calcium-dependent hydrolysis of the 2-acyl groups in 3-sn-phosphoglycerides. This is Acidic phospholipase A2 daboiatoxin B chain from Daboia siamensis (Eastern Russel's viper).